A 390-amino-acid chain; its full sequence is Glutamate 5-kinase (390 aa).

K29 lines the ATP pocket. Substrate contacts are provided by S69, D156, and N168. An ATP-binding site is contributed by 188 to 189 (TD). Positions 295-374 (SGSLIVDAGA…EQFDRILGNN (80 aa)) constitute a PUA domain.

It belongs to the glutamate 5-kinase family.

It localises to the cytoplasm. It carries out the reaction L-glutamate + ATP = L-glutamyl 5-phosphate + ADP. It participates in amino-acid biosynthesis; L-proline biosynthesis; L-glutamate 5-semialdehyde from L-glutamate: step 1/2. Catalyzes the transfer of a phosphate group to glutamate to form L-glutamate 5-phosphate. This is Glutamate 5-kinase from Psychrobacter cryohalolentis (strain ATCC BAA-1226 / DSM 17306 / VKM B-2378 / K5).